Consider the following 78-residue polypeptide: Acyl carrier protein (78 aa).

The Carrier domain occupies S2–V77. At S37 the chain carries O-(pantetheine 4'-phosphoryl)serine.

The protein belongs to the acyl carrier protein (ACP) family. In terms of processing, 4'-phosphopantetheine is transferred from CoA to a specific serine of apo-ACP by AcpS. This modification is essential for activity because fatty acids are bound in thioester linkage to the sulfhydryl of the prosthetic group.

It is found in the cytoplasm. Its pathway is lipid metabolism; fatty acid biosynthesis. Carrier of the growing fatty acid chain in fatty acid biosynthesis. This chain is Acyl carrier protein, found in Cytophaga hutchinsonii (strain ATCC 33406 / DSM 1761 / CIP 103989 / NBRC 15051 / NCIMB 9469 / D465).